The primary structure comprises 480 residues: uncharacterized protein (480 aa).

A helical membrane pass occupies residues 7–28; sequence HVISIFETFGAYFINIFYNFLY. N-linked (GlcNAc...) asparagine; by host glycans are attached at residues asparagine 73 and asparagine 195. Residues 195–235 adopt a coiled-coil conformation; it reads NRSLLYQIEELTSEKKSLLAELSTLRKKYEKRQSEYRRLVQ. Positions 297 to 332 are disordered; it reads ELTSKSPSNYPVPQSRTIVSKPSDNYPVPQSRSSKI. Residues 301-329 show a composition bias toward polar residues; the sequence is KSPSNYPVPQSRTIVSKPSDNYPVPQSRS. Asparagine 455 carries an N-linked (GlcNAc...) asparagine; by host glycan.

The protein belongs to the asfivirus B475L family.

It is found in the host membrane. This is an uncharacterized protein from African swine fever virus (isolate Pig/Kenya/KEN-50/1950) (ASFV).